Reading from the N-terminus, the 137-residue chain is uncharacterized protein (137 aa).

This sequence belongs to the DCC thiol-disulfide oxidoreductase family.

This is an uncharacterized protein from Bacillus subtilis (strain 168).